The following is a 227-amino-acid chain: Ribose-5-phosphate isomerase A (227 aa).

Substrate is bound by residues 26-29 (TGST), 82-85 (DGAD), and 95-98 (KGGG). The active-site Proton acceptor is the Glu104. Lys122 serves as a coordination point for substrate.

Belongs to the ribose 5-phosphate isomerase family. In terms of assembly, homodimer.

The enzyme catalyses aldehydo-D-ribose 5-phosphate = D-ribulose 5-phosphate. It functions in the pathway carbohydrate degradation; pentose phosphate pathway; D-ribose 5-phosphate from D-ribulose 5-phosphate (non-oxidative stage): step 1/1. Catalyzes the reversible conversion of ribose-5-phosphate to ribulose 5-phosphate. This chain is Ribose-5-phosphate isomerase A, found in Streptococcus pyogenes serotype M2 (strain MGAS10270).